Here is a 256-residue protein sequence, read N- to C-terminus: Metallo-beta-lactamase type 2 (256 aa).

Positions 1–29 (MKNTLLKLGVCVSLLGITPFVSTISSVQA) are cleaved as a signal peptide. 5 residues coordinate Zn(2+): H115, H117, D119, H178, and C197. 2 residues coordinate substrate: K200 and N209. H239 provides a ligand contact to Zn(2+).

This sequence belongs to the metallo-beta-lactamase superfamily. Class-B beta-lactamase family. As to quaternary structure, monomer. It depends on Zn(2+) as a cofactor.

The protein localises to the periplasm. It carries out the reaction a beta-lactam + H2O = a substituted beta-amino acid. Its activity is regulated as follows. Inhibited by chelating agents such as EDTA. Confers resistance to the different beta-lactams antibiotics (penicillin, cephalosporin and carbapenem) via the hydrolysis of the beta-lactam ring. Benzylpenicillin is a better substrate than cephalosporin C and ampicillin. In Bacillus cereus, this protein is Metallo-beta-lactamase type 2.